Here is a 122-residue protein sequence, read N- to C-terminus: Prefoldin subunit 1 (122 aa).

At A2 the chain carries N-acetylalanine.

The protein belongs to the prefoldin subunit beta family. As to quaternary structure, heterohexamer of two PFD-alpha type and four PFD-beta type subunits.

Its function is as follows. Binds specifically to cytosolic chaperonin (c-CPN) and transfers target proteins to it. Binds to nascent polypeptide chain and promotes folding in an environment in which there are many competing pathways for nonnative proteins. This Pongo abelii (Sumatran orangutan) protein is Prefoldin subunit 1 (PFDN1).